The primary structure comprises 357 residues: MVNAPIKLLIAASGTGGHLFPAIALAEKLPDYEIEWLGVPNRLETQLVPKQYPLNTIAVEGFQQGLGISSLVILGKLIGSILKVRRLLKQGNFQGVVTTGGYIAGPAVIAARSLGLPVIFHESNALPGKVTRFFGPWCSVVALGFDVATKYLPRATSVCVGTPVRSQFLNLGNNSQLDLAIPGDVPVIVVFGGSQGAVAVNQLVRQAAPAWFEAGAYVVHLTGDRDPDVDSLKHPQYIELPFYDNMAALLQRANLAISRSGAGSLTELTVCGTPAILIPYPFAAEDHQSYNAEVFTKAGAALTFKQSDLTAELLQTQVLNLLQSPTELAKMGENAKAIAVPDSADKLATLVREVVER.

UDP-N-acetyl-alpha-D-glucosamine is bound by residues 15 to 17 (TGG), Asn124, Arg165, Ser194, and Gln288.

This sequence belongs to the glycosyltransferase 28 family. MurG subfamily.

The protein resides in the cell inner membrane. The enzyme catalyses di-trans,octa-cis-undecaprenyl diphospho-N-acetyl-alpha-D-muramoyl-L-alanyl-D-glutamyl-meso-2,6-diaminopimeloyl-D-alanyl-D-alanine + UDP-N-acetyl-alpha-D-glucosamine = di-trans,octa-cis-undecaprenyl diphospho-[N-acetyl-alpha-D-glucosaminyl-(1-&gt;4)]-N-acetyl-alpha-D-muramoyl-L-alanyl-D-glutamyl-meso-2,6-diaminopimeloyl-D-alanyl-D-alanine + UDP + H(+). It participates in cell wall biogenesis; peptidoglycan biosynthesis. Functionally, cell wall formation. Catalyzes the transfer of a GlcNAc subunit on undecaprenyl-pyrophosphoryl-MurNAc-pentapeptide (lipid intermediate I) to form undecaprenyl-pyrophosphoryl-MurNAc-(pentapeptide)GlcNAc (lipid intermediate II). This is UDP-N-acetylglucosamine--N-acetylmuramyl-(pentapeptide) pyrophosphoryl-undecaprenol N-acetylglucosamine transferase from Nostoc sp. (strain PCC 7120 / SAG 25.82 / UTEX 2576).